We begin with the raw amino-acid sequence, 710 residues long: Polyribonucleotide nucleotidyltransferase (710 aa).

Mg(2+) is bound by residues Asp486 and Asp492. In terms of domain architecture, KH spans 553–612; it reads PRIHTIKISVDKIKDVIGKGGSVIRALTEETGTTIEIEDDGTVKIAATDGDKAKFAIRRI. Positions 622–690 constitute an S1 motif domain; it reads GRIYNGKVTR…RQGRVRLSIK (69 aa). A disordered region spans residues 690 to 710; sequence KEAGEQAQPEAEAVPAAPEAE. The segment covering 694 to 710 has biased composition (low complexity); the sequence is EQAQPEAEAVPAAPEAE.

This sequence belongs to the polyribonucleotide nucleotidyltransferase family. In terms of assembly, component of the RNA degradosome, which is a multiprotein complex involved in RNA processing and mRNA degradation. It depends on Mg(2+) as a cofactor.

The protein resides in the cytoplasm. It carries out the reaction RNA(n+1) + phosphate = RNA(n) + a ribonucleoside 5'-diphosphate. In terms of biological role, involved in mRNA degradation. Catalyzes the phosphorolysis of single-stranded polyribonucleotides processively in the 3'- to 5'-direction. This Erwinia tasmaniensis (strain DSM 17950 / CFBP 7177 / CIP 109463 / NCPPB 4357 / Et1/99) protein is Polyribonucleotide nucleotidyltransferase.